The following is a 234-amino-acid chain: Endonuclease V (234 aa).

The Mg(2+) site is built by Asp-42 and Asp-108.

It belongs to the endonuclease V family. Mg(2+) serves as cofactor.

It is found in the cytoplasm. It catalyses the reaction Endonucleolytic cleavage at apurinic or apyrimidinic sites to products with a 5'-phosphate.. Functionally, DNA repair enzyme involved in the repair of deaminated bases. Selectively cleaves double-stranded DNA at the second phosphodiester bond 3' to a deoxyinosine leaving behind the intact lesion on the nicked DNA. The chain is Endonuclease V from Geotalea uraniireducens (strain Rf4) (Geobacter uraniireducens).